The following is a 486-amino-acid chain: Membrane-bound lytic murein transglycosylase F (486 aa).

The signal sequence occupies residues 1 to 21; the sequence is MTRIKLSYFTIGLVALLLALA. The interval 22–268 is non-LT domain; sequence LWPNIPWRNG…RLEEKYLGHV (247 aa). Residues 269-486 form an LT domain region; the sequence is GSFDYVDTKT…VVGPGWSIGD (218 aa). The active site involves E313.

In the N-terminal section; belongs to the bacterial solute-binding protein 3 family. The protein in the C-terminal section; belongs to the transglycosylase Slt family.

The protein resides in the cell outer membrane. The catalysed reaction is Exolytic cleavage of the (1-&gt;4)-beta-glycosidic linkage between N-acetylmuramic acid (MurNAc) and N-acetylglucosamine (GlcNAc) residues in peptidoglycan, from either the reducing or the non-reducing ends of the peptidoglycan chains, with concomitant formation of a 1,6-anhydrobond in the MurNAc residue.. Its function is as follows. Murein-degrading enzyme that degrades murein glycan strands and insoluble, high-molecular weight murein sacculi, with the concomitant formation of a 1,6-anhydromuramoyl product. Lytic transglycosylases (LTs) play an integral role in the metabolism of the peptidoglycan (PG) sacculus. Their lytic action creates space within the PG sacculus to allow for its expansion as well as for the insertion of various structures such as secretion systems and flagella. The chain is Membrane-bound lytic murein transglycosylase F from Yersinia pseudotuberculosis serotype I (strain IP32953).